We begin with the raw amino-acid sequence, 217 residues long: 3,4-dihydroxy-2-butanone 4-phosphate synthase (217 aa).

D-ribulose 5-phosphate contacts are provided by residues 37 to 38 (RE), Asp-42, 150 to 154 (RGGHT), and Glu-174. Glu-38 is a Mg(2+) binding site. A Mg(2+)-binding site is contributed by His-153.

It belongs to the DHBP synthase family. Homodimer. The cofactor is Mg(2+). It depends on Mn(2+) as a cofactor.

The catalysed reaction is D-ribulose 5-phosphate = (2S)-2-hydroxy-3-oxobutyl phosphate + formate + H(+). Its pathway is cofactor biosynthesis; riboflavin biosynthesis; 2-hydroxy-3-oxobutyl phosphate from D-ribulose 5-phosphate: step 1/1. In terms of biological role, catalyzes the conversion of D-ribulose 5-phosphate to formate and 3,4-dihydroxy-2-butanone 4-phosphate. The polypeptide is 3,4-dihydroxy-2-butanone 4-phosphate synthase (Salmonella heidelberg (strain SL476)).